The sequence spans 281 residues: Phosphonates import ATP-binding protein PhnC (281 aa).

One can recognise an ABC transporter domain in the interval 2–245; the sequence is FELKDVTRRF…AVKEIYGTDK (244 aa). An ATP-binding site is contributed by 34-41; the sequence is GRSGAGKS.

The protein belongs to the ABC transporter superfamily. Phosphonates importer (TC 3.A.1.9.1) family. The complex is composed of two ATP-binding proteins (PhnC), two transmembrane proteins (PhnE) and a solute-binding protein (PhnD).

It is found in the cell inner membrane. It carries out the reaction phosphonate(out) + ATP + H2O = phosphonate(in) + ADP + phosphate + H(+). Functionally, part of the ABC transporter complex PhnCDE involved in phosphonates import. Responsible for energy coupling to the transport system. The chain is Phosphonates import ATP-binding protein PhnC from Rhizobium etli (strain ATCC 51251 / DSM 11541 / JCM 21823 / NBRC 15573 / CFN 42).